The following is a 99-amino-acid chain: SAGA-associated factor 11 (99 aa).

An SGF11-type zinc finger spans residues 71–92; the sequence is IHCENCGRDVSANRLAAHLQRC.

This sequence belongs to the SGF11 family. In terms of assembly, component of the 1.8 MDa SAGA transcription coactivator-HAT complex. SAGA is built of 5 distinct domains with specialized functions. Within the SAGA complex, SUS1, SGF11, SGF73 and UBP8 form an additional subcomplex of SAGA called the DUB module (deubiquitination module). Interacts directly with SGF73, SUS1 and UBP8.

It localises to the nucleus. Functionally, functions as a component of the transcription regulatory histone acetylation (HAT) complex SAGA. At the promoters, SAGA is required for recruitment of the basal transcription machinery. It influences RNA polymerase II transcriptional activity through different activities such as TBP interaction and promoter selectivity, interaction with transcription activators, and chromatin modification through histone acetylation and deubiquitination. SAGA acetylates nucleosomal histone H3 to some extent (to form H3K9ac, H3K14ac, H3K18ac and H3K23ac). SAGA interacts with DNA via upstream activating sequences (UASs). Involved in transcriptional regulation of a subset of SAGA-regulated genes. Within the SAGA complex, participates in a subcomplex, that specifically deubiquitinates histones H2B. This is SAGA-associated factor 11 from Saccharomyces cerevisiae (strain YJM789) (Baker's yeast).